A 199-amino-acid polypeptide reads, in one-letter code: Chaperone protein TorD (199 aa).

Belongs to the TorD/DmsD family. TorD subfamily.

The protein resides in the cytoplasm. Functionally, involved in the biogenesis of TorA. Acts on TorA before the insertion of the molybdenum cofactor and, as a result, probably favors a conformation of the apoenzyme that is competent for acquiring the cofactor. This Actinobacillus pleuropneumoniae serotype 7 (strain AP76) protein is Chaperone protein TorD.